Consider the following 159-residue polypeptide: Endoribonuclease YbeY (159 aa).

Zn(2+) is bound by residues His123, His127, and His133.

It belongs to the endoribonuclease YbeY family. It depends on Zn(2+) as a cofactor.

It is found in the cytoplasm. Functionally, single strand-specific metallo-endoribonuclease involved in late-stage 70S ribosome quality control and in maturation of the 3' terminus of the 16S rRNA. The sequence is that of Endoribonuclease YbeY from Bacillus pumilus (strain SAFR-032).